Consider the following 88-residue polypeptide: Large ribosomal subunit protein bL27 (88 aa).

The disordered stretch occupies residues Met-1–Val-23.

The protein belongs to the bacterial ribosomal protein bL27 family.

This is Large ribosomal subunit protein bL27 from Methylorubrum extorquens (strain CM4 / NCIMB 13688) (Methylobacterium extorquens).